Reading from the N-terminus, the 436-residue chain is ATP-dependent protease ATPase subunit HslU (436 aa).

Residues isoleucine 18, 60 to 65 (GVGKTE), aspartate 249, glutamate 314, and arginine 386 contribute to the ATP site.

It belongs to the ClpX chaperone family. HslU subfamily. A double ring-shaped homohexamer of HslV is capped on each side by a ring-shaped HslU homohexamer. The assembly of the HslU/HslV complex is dependent on binding of ATP.

The protein resides in the cytoplasm. Its function is as follows. ATPase subunit of a proteasome-like degradation complex; this subunit has chaperone activity. The binding of ATP and its subsequent hydrolysis by HslU are essential for unfolding of protein substrates subsequently hydrolyzed by HslV. HslU recognizes the N-terminal part of its protein substrates and unfolds these before they are guided to HslV for hydrolysis. The protein is ATP-dependent protease ATPase subunit HslU of Chelativorans sp. (strain BNC1).